We begin with the raw amino-acid sequence, 130 residues long: Phosphoribosyl-AMP cyclohydrolase (130 aa).

Mg(2+) is bound at residue aspartate 77. A Zn(2+)-binding site is contributed by cysteine 78. Positions 79 and 81 each coordinate Mg(2+). Zn(2+) contacts are provided by cysteine 95 and cysteine 102.

The protein belongs to the PRA-CH family. As to quaternary structure, homodimer. It depends on Mg(2+) as a cofactor. Zn(2+) serves as cofactor.

The protein localises to the cytoplasm. It carries out the reaction 1-(5-phospho-beta-D-ribosyl)-5'-AMP + H2O = 1-(5-phospho-beta-D-ribosyl)-5-[(5-phospho-beta-D-ribosylamino)methylideneamino]imidazole-4-carboxamide. It functions in the pathway amino-acid biosynthesis; L-histidine biosynthesis; L-histidine from 5-phospho-alpha-D-ribose 1-diphosphate: step 3/9. Catalyzes the hydrolysis of the adenine ring of phosphoribosyl-AMP. This Pseudomonas syringae pv. tomato (strain ATCC BAA-871 / DC3000) protein is Phosphoribosyl-AMP cyclohydrolase.